Consider the following 316-residue polypeptide: uncharacterized protein (316 aa).

Residues 285 to 316 (APEGDLGDIIEVDPSEPRSDPYRRLRTPPPGG) form a disordered region. A compositionally biased stretch (acidic residues) spans 289–298 (DLGDIIEVDP).

Possibly necessary for replication. This is an uncharacterized protein from Halobacterium salinarum (Halobacterium halobium).